Reading from the N-terminus, the 1274-residue chain is DENN domain-containing protein 5B (1274 aa).

An N-acetylserine modification is found at serine 2. Positions 39–244 constitute a uDENN domain; it reads DELAGENFDQ…EVPLPPPGRS (206 aa). 2 positions are modified to phosphoserine: serine 49 and serine 178. In terms of domain architecture, cDENN spans 263–399; it reads ELPLSDYPLR…VDFIQELSEV (137 aa). The region spanning 401-581 is the dDENN domain; the sequence is LQFGIPPEGS…DNKIMSQWEE (181 aa). An RUN 1 domain is found at 772 to 932; the sequence is LEENTLIASL…DYFCFTSVFT (161 aa). A Phosphoserine modification is found at serine 822. A helical membrane pass occupies residues 916–936; that stretch reads LLSLNAVDYFCFTSVFTTIMI. The PLAT domain maps to 936-1044; the sequence is IPYRSVIIPI…DDGSLERILI (109 aa). Threonine 1062 carries the phosphothreonine modification. Phosphoserine is present on residues serine 1068, serine 1076, and serine 1079. Residues 1118–1267 form the RUN 2 domain; the sequence is TVLLCGENGL…QDFTIVLEGS (150 aa).

The protein belongs to the RAB6IP1 family.

The protein resides in the membrane. Guanine nucleotide exchange factor (GEF) which may activate RAB39A and/or RAB39B. Promotes the exchange of GDP to GTP, converting inactive GDP-bound Rab proteins into their active GTP-bound form. In Mus musculus (Mouse), this protein is DENN domain-containing protein 5B (Dennd5b).